Consider the following 61-residue polypeptide: Large ribosomal subunit protein uL30 (61 aa).

Belongs to the universal ribosomal protein uL30 family. As to quaternary structure, part of the 50S ribosomal subunit.

The chain is Large ribosomal subunit protein uL30 from Chromohalobacter salexigens (strain ATCC BAA-138 / DSM 3043 / CIP 106854 / NCIMB 13768 / 1H11).